The sequence spans 541 residues: MDSRRSLLVLALIFISFLVYQQWQLDKNPPVQTEQTTSITATSDVPASSPSNSQAIADSQTRGRIITLENDVFRLKIDTLGGDVISSELLKYDAELDSKTPFELLKDTKEHIYIAQSGLIGKNGIDTRSGRAQYQIEGDNFKLAEGQESLSVPLLFEKDGVTYQKIFVLKRGSYDLGVDYKIDNQSGQAIEVEPYGQLKHSIIESSGNVAMPTYTGGAYSSSETNYKKYSFADMQDNNLSIDTKAGWVAVLQHYFVSAWIPNQDVNNQLYTITDSKNNVASIGYRGPVVTIPAGSQETITSSLWTGPKLQNQMATVANNLDLTVDYGWAWFIAKPLFWLLTFIQGIVSNWGLAIICVTIVVKAILYPLTKAQYTSMAKMRILQPKMQEMRERFGDDRQRMSQEMMKLYKEEKVNPLGGCLPILLQMPIFIALYWTFLEAVELRHAPFFGWIQDLSAQDPYYILPILMGISMFLLQKMSPTPVTDPTQQKVMNFMPLVFMFFFLWFPSGLVLYWLVSNLITIAQQQLIYRGLEKKGLHSRKK.

A helical membrane pass occupies residues 6-26 (SLLVLALIFISFLVYQQWQLD). Residues 34-56 (EQTTSITATSDVPASSPSNSQAI) form a disordered region. 4 helical membrane passes run 337-357 (FWLL…IICV), 416-436 (LGGC…YWTF), 454-474 (LSAQ…MFLL), and 495-515 (PLVF…YWLV).

Belongs to the OXA1/ALB3/YidC family. Type 1 subfamily. Interacts with the Sec translocase complex via SecD. Specifically interacts with transmembrane segments of nascent integral membrane proteins during membrane integration.

It localises to the cell inner membrane. Required for the insertion and/or proper folding and/or complex formation of integral membrane proteins into the membrane. Involved in integration of membrane proteins that insert both dependently and independently of the Sec translocase complex, as well as at least some lipoproteins. Aids folding of multispanning membrane proteins. The protein is Membrane protein insertase YidC of Haemophilus influenzae (strain 86-028NP).